A 924-amino-acid polypeptide reads, in one-letter code: Isoleucine--tRNA ligase (924 aa).

A 'HIGH' region motif is present at residues 57–67 (PYANGDIHMGH). L-isoleucyl-5'-AMP is bound at residue glutamate 552. A 'KMSKS' region motif is present at residues 593 to 597 (KMSKS). Lysine 596 is a binding site for ATP. 4 residues coordinate Zn(2+): cysteine 891, cysteine 894, cysteine 911, and cysteine 914.

The protein belongs to the class-I aminoacyl-tRNA synthetase family. IleS type 1 subfamily. In terms of assembly, monomer. Zn(2+) serves as cofactor.

It localises to the cytoplasm. It catalyses the reaction tRNA(Ile) + L-isoleucine + ATP = L-isoleucyl-tRNA(Ile) + AMP + diphosphate. Its function is as follows. Catalyzes the attachment of isoleucine to tRNA(Ile). As IleRS can inadvertently accommodate and process structurally similar amino acids such as valine, to avoid such errors it has two additional distinct tRNA(Ile)-dependent editing activities. One activity is designated as 'pretransfer' editing and involves the hydrolysis of activated Val-AMP. The other activity is designated 'posttransfer' editing and involves deacylation of mischarged Val-tRNA(Ile). In Geobacillus kaustophilus (strain HTA426), this protein is Isoleucine--tRNA ligase.